We begin with the raw amino-acid sequence, 1031 residues long: MICPIFFLYIINVLFTQYFIKCEGNKVTVISHNNGHNDNLDVNKNGVISQENVFDTSESLNLPSNKKVGSDDLNTTTISFTVPDNLENEVKVVSSSESGKGATVSHTKVTSEGLSDTQPNVTQSVSSSTHTPGSLDSTMSTEQHSSVSQSSLPTESSSETLNKATVPEIPIQINSGLLKNYNGVKVTGSCGSYFRVYLVPHILIYALTKYSVIQLESLFNDNARIDVEHKGELQNKCSEGYHFKLVVYITHNVLNLKWKTYKPNEESKSEDSDVRKYRIPKLERPFTSIQVYTANSKAGVIETKNYNIRTDIPDTCDAIATDCFLNGNVNIEKCFQCTLLVQKKDKSHECFKYVSSEMKKKMNEIKVKAQDDFNPNEYKLIESIDNILSKIYKKANKPFEISKDLINLEDLDYQFKNELLEYCKLLKKVDTSGTLEEYELGNAEDIYNNLTRLLKSHSDENIVTLQGKLRNTAICIKNVDEWILNKRGLTLPSESPSESSSKSDSYLNTFNDKDKNEDKDDMSKNSKEEFKNDDKENSDDQNNNDSNKKDDENNINNGDTNYVYDFDDDDYDNNSYEKDMYESPIKENKNGVIDLEKYGNQIKLKSPYFKNSKYCNYEYCNRWRDKTSCISQIEVEEQGNCGLCWIFASKLHFETIRCMRGYGHFRSSALYVANCSKRKPIDRCEEGSNPLEFLRILDEKKFLPLESNYPYSYTSAGNSCPKLPNSWTNLWGDTKLLFNKKVHRYIGNKGFISHETSYFKNNMDLFIDMVKREVQNKGSVIIYIKTQDVIGYDFNGKGVHSMCGDRTPDHAANIIGYGNYINKKGEKRSYWLIRNSWSYYWGDEGNFRVDMLGPKNCLYNFIHTVVFFKLDLGTIHVPKKKSWKKNVYFLRHNPDFMYSLYYNNYEPETSQDFESENDYDNAFVHGQSNESDETNKEGKNVHNSVEKKIQILHILKHIKDSQIKRGLVKYDNINETKDEHTCSRVNSQDAEKYEECKKFCLTKWNECKDHYSPGYCLTDLYKGEDCNFCYV.

Positions 1-24 (MICPIFFLYIINVLFTQYFIKCEG) are cleaved as a signal peptide. N74 carries N-linked (GlcNAc...) asparagine glycosylation. Residues 91-101 (KVVSSSESGKG) are compositionally biased toward low complexity. The disordered stretch occupies residues 91-163 (KVVSSSESGK…TESSSETLNK (73 aa)). Positions 104–139 (VSHTKVTSEGLSDTQPNVTQSVSSSTHTPGSLDSTM) are enriched in polar residues. N120 carries an N-linked (GlcNAc...) asparagine glycan. Low complexity predominate over residues 140 to 158 (STEQHSSVSQSSLPTESSS). N449 is a glycosylation site (N-linked (GlcNAc...) asparagine). Residues 490 to 567 (TLPSESPSES…GDTNYVYDFD (78 aa)) form a disordered region. Over residues 492–505 (PSESPSESSSKSDS) the composition is skewed to low complexity. A compositionally biased stretch (basic and acidic residues) spans 511–535 (NDKDKNEDKDDMSKNSKEEFKNDDK). N544 carries N-linked (GlcNAc...) asparagine glycosylation. Residues 554 to 564 (NINNGDTNYVY) show a composition bias toward low complexity. N-linked (GlcNAc...) asparagine glycosylation is present at N573. Residue C644 is part of the active site. N-linked (GlcNAc...) asparagine glycosylation occurs at N674. Catalysis depends on residues H810 and N835. N929 and N974 each carry an N-linked (GlcNAc...) asparagine glycan.

It belongs to the peptidase C1 family. In terms of processing, just prior to merozoite egress from host erythrocytes, proteolytically cleaved by SUB1 to generate the active 75kDa form.

Its subcellular location is the parasitophorous vacuole lumen. It localises to the parasitophorous vacuole membrane. Functionally, cysteine protease which plays an essential role in merozoite egress from host erythrocytes. May cleave host SPTB/beta spectrin and ANK1/ankyrin-1 which disrupts host erythrocyte actin cytoskeleton and leads to host erythrocyte cell membrane rupture. The chain is Serine-repeat antigen protein 6 from Plasmodium falciparum (isolate 3D7).